We begin with the raw amino-acid sequence, 307 residues long: Taste receptor type 2 member 10 (307 aa).

At 1–6 (MLRVVE) the chain is on the extracellular side. The helical transmembrane segment at 7–27 (GIFIFVVISEXVFGVLGNGFI) threads the bilayer. The Cytoplasmic portion of the chain corresponds to 28–42 (GLVNCIDCAKNKLST). The chain crosses the membrane as a helical span at residues 43–63 (IGFILTGLAISRIFLIWIIIT). The Extracellular segment spans residues 64–100 (DGFIQIFSPDIYASGNLIEYISYFWVIGNQSSMWFAT). Asparagine 92 carries N-linked (GlcNAc...) asparagine glycosylation. A helical transmembrane segment spans residues 101 to 121 (SLSIFYFLKIANFSNYIFLWL). The Cytoplasmic portion of the chain corresponds to 122 to 126 (KSRTN). The helical transmembrane segment at 127–147 (MVLPFMIVFLLISSLLNFAHI) threads the bilayer. The Extracellular segment spans residues 148–179 (AKILNDYKMKNDTVWDLNMYKSEYFIKQILLN). The N-linked (GlcNAc...) asparagine glycan is linked to asparagine 158. A helical transmembrane segment spans residues 180–200 (LGVIFFFTLSLITCVFLIISL). Topologically, residues 201-227 (WRHNRQMQSNVTGLRDSNTEAHVKAMK) are cytoplasmic. Residues 228-248 (VLISFXILFILYFIGMAIEIS) form a helical membrane-spanning segment. The Extracellular portion of the chain corresponds to 249-257 (CFTVRENKL). The chain crosses the membrane as a helical span at residues 258-278 (LLMFGMTTTAIYPWGHSFILI). The Cytoplasmic segment spans residues 279–307 (LGNSKLKQASLRVLQQLKCCEKRKNLRVT).

The protein belongs to the G-protein coupled receptor T2R family.

It localises to the membrane. Functionally, receptor that may play a role in the perception of bitterness and is gustducin-linked. May play a role in sensing the chemical composition of the gastrointestinal content. The activity of this receptor may stimulate alpha gustducin, mediate PLC-beta-2 activation and lead to the gating of TRPM5. In Gorilla gorilla gorilla (Western lowland gorilla), this protein is Taste receptor type 2 member 10 (TAS2R10).